A 1061-amino-acid polypeptide reads, in one-letter code: Bifunctional cytochrome P450/NADPH--P450 reductase 1 (1061 aa).

Residues 1-475 (MKETSPIPQP…AEKAAPDEQK (475 aa)) form a cytochrome P450 region. Residue cysteine 403 coordinates heme. An NADPH--P450 reductase region spans residues 476–1061 (EKTEAKGASV…MYAKDVWAGI (586 aa)). The Flavodoxin-like domain maps to 493–632 (LLVLYGSDTG…QLDEWKKSMW (140 aa)). Residues 499 to 504 (SDTGTA), 546 to 549 (SYNG), 580 to 582 (CGD), and 588 to 590 (TYQ) each bind FMN. An FAD-binding FR-type domain is found at 671–904 (YEASHASIAE…RTPESRFQLP (234 aa)).

The protein in the N-terminal section; belongs to the cytochrome P450 family. It depends on FAD as a cofactor. The cofactor is FMN. Requires heme b as cofactor.

The protein resides in the cytoplasm. The enzyme catalyses an organic molecule + reduced [NADPH--hemoprotein reductase] + O2 = an alcohol + oxidized [NADPH--hemoprotein reductase] + H2O + H(+). The catalysed reaction is 2 oxidized [cytochrome P450] + NADPH = 2 reduced [cytochrome P450] + NADP(+) + H(+). In terms of biological role, functions as a fatty acid monooxygenase. Catalyzes hydroxylation of a range of long-chain fatty acids, with a preference for long-chain unsaturated and branched-chain fatty acids over saturated fatty acids. Hydroxylation of myristic acid occurs mainly at the omega-2 position. Also displays a NADPH-dependent reductase activity in the C-terminal domain, which allows electron transfer from NADPH to the heme iron of the cytochrome P450 N-terminal domain. Is also able to catalyze efficient oxidation of sodium dodecyl sulfate (SDS). This chain is Bifunctional cytochrome P450/NADPH--P450 reductase 1, found in Bacillus subtilis (strain 168).